A 186-amino-acid polypeptide reads, in one-letter code: MAQRERNREDRGREERDSEFVDKLVHINRVAKVVKGGRRFGFAALVVVGDQKGRVGFGHGKAREVPEAIRKATEAAKRDMIFVPLRSGRTLHHDVEGRHGAGKVLLRAAPAGKGIIAGGPMRAVFETLGVQDVVAKSLGSSNPYNMVRATFDALKHQMHPKDIAAQRGIKYSTLQARRHDVVGSEE.

The region spanning 20 to 83 is the S5 DRBM domain; the sequence is FVDKLVHINR…EAAKRDMIFV (64 aa).

Belongs to the universal ribosomal protein uS5 family. In terms of assembly, part of the 30S ribosomal subunit. Contacts proteins S4 and S8.

In terms of biological role, with S4 and S12 plays an important role in translational accuracy. Its function is as follows. Located at the back of the 30S subunit body where it stabilizes the conformation of the head with respect to the body. This chain is Small ribosomal subunit protein uS5, found in Brucella anthropi (strain ATCC 49188 / DSM 6882 / CCUG 24695 / JCM 21032 / LMG 3331 / NBRC 15819 / NCTC 12168 / Alc 37) (Ochrobactrum anthropi).